Reading from the N-terminus, the 222-residue chain is E3 ubiquitin-protein ligase RNF138 (222 aa).

The RING-type zinc-finger motif lies at 17–57 (CPVCQEILQTPVRTQTCRHVFCRKCFMLAMKSGGAYCPLCR). Residues Cys-85, Cys-88, His-100, and Cys-104 each contribute to the Zn(2+) site. The C2HC RNF-type zinc finger occupies 85 to 104 (CMYCGKMMKLHYMKLHYKSC). C2H2-type zinc fingers lie at residues 134–157 (YKCP…NNVH) and 164–192 (MVCP…NARH). Positions 202–220 (INIDEEAQFQIAVANSYKI) constitute a UIM domain.

Interacts with nlk.2 (via C-terminus) and ube2k. Post-translationally, auto-ubiquitinated.

The protein resides in the chromosome. It catalyses the reaction S-ubiquitinyl-[E2 ubiquitin-conjugating enzyme]-L-cysteine + [acceptor protein]-L-lysine = [E2 ubiquitin-conjugating enzyme]-L-cysteine + N(6)-ubiquitinyl-[acceptor protein]-L-lysine.. Its pathway is protein modification; protein ubiquitination. Functionally, E3 ubiquitin-protein ligase involved in DNA damage response by promoting DNA resection and homologous recombination. Recruited to sites of double-strand breaks following DNA damage and specifically promotes double-strand break repair via homologous recombination. Together with nlk.2, involved in the ubiquitination and degradation of TCF/LEF. Also exhibits auto-ubiquitination activity in combination with ube2k. May act as a negative regulator in the Wnt/beta-catenin-mediated signaling pathway. The chain is E3 ubiquitin-protein ligase RNF138 (rnf138) from Xenopus laevis (African clawed frog).